The sequence spans 159 residues: Cyclic pyranopterin monophosphate synthase (159 aa).

Residues 75–77 (LCH) and 113–114 (ME) each bind substrate. Asp-128 is a catalytic residue.

This sequence belongs to the MoaC family. Homohexamer; trimer of dimers.

The catalysed reaction is (8S)-3',8-cyclo-7,8-dihydroguanosine 5'-triphosphate = cyclic pyranopterin phosphate + diphosphate. It participates in cofactor biosynthesis; molybdopterin biosynthesis. Catalyzes the conversion of (8S)-3',8-cyclo-7,8-dihydroguanosine 5'-triphosphate to cyclic pyranopterin monophosphate (cPMP). The chain is Cyclic pyranopterin monophosphate synthase from Yersinia pseudotuberculosis serotype IB (strain PB1/+).